The primary structure comprises 318 residues: CRISPR-associated endonuclease Cas1 1 (318 aa).

Mn(2+) contacts are provided by glutamate 160, histidine 225, and glutamate 240.

The protein belongs to the CRISPR-associated endonuclease Cas1 family. In terms of assembly, homodimer, forms a heterotetramer with a Cas2 homodimer. It depends on Mg(2+) as a cofactor. Requires Mn(2+) as cofactor.

Its function is as follows. CRISPR (clustered regularly interspaced short palindromic repeat), is an adaptive immune system that provides protection against mobile genetic elements (viruses, transposable elements and conjugative plasmids). CRISPR clusters contain spacers, sequences complementary to antecedent mobile elements, and target invading nucleic acids. CRISPR clusters are transcribed and processed into CRISPR RNA (crRNA). Acts as a dsDNA endonuclease. Involved in the integration of spacer DNA into the CRISPR cassette. The protein is CRISPR-associated endonuclease Cas1 1 of Thermodesulfovibrio yellowstonii (strain ATCC 51303 / DSM 11347 / YP87).